Here is a 471-residue protein sequence, read N- to C-terminus: D-hydantoinase (471 aa).

The Zn(2+) site is built by His-58, His-60, and Lys-150. Lys-150 carries the N6-carboxylysine modification. Substrate is bound at residue Tyr-155. Zn(2+)-binding residues include His-183 and His-239. Substrate is bound at residue Ser-288. Asp-315 contributes to the Zn(2+) binding site. Asn-337 lines the substrate pocket.

This sequence belongs to the metallo-dependent hydrolases superfamily. Hydantoinase/dihydropyrimidinase family. In terms of assembly, homotetramer. The cofactor is Zn(2+). It depends on Ni(2+) as a cofactor. Co(2+) serves as cofactor. Requires Mn(2+) as cofactor. Post-translationally, carboxylation allows a single lysine to coordinate two zinc ions.

Its activity is regulated as follows. Completely inhibited by p-chloromercuribenzoate and partially inhibited by metal chelating agents. Functionally, catalyzes the stereospecific hydrolysis of the cyclic amide bond of D-hydantoin. Has no activity on dihydropyrimidines. In Geobacillus stearothermophilus (Bacillus stearothermophilus), this protein is D-hydantoinase.